Here is an 85-residue protein sequence, read N- to C-terminus: Small ribosomal subunit protein bS16 (85 aa).

The protein belongs to the bacterial ribosomal protein bS16 family.

This is Small ribosomal subunit protein bS16 from Acinetobacter baylyi (strain ATCC 33305 / BD413 / ADP1).